The sequence spans 384 residues: GTPase Obg (384 aa).

An Obg domain is found at 1–159; sequence MKFIDEAKIE…RSLQLELKVL (159 aa). The interval 20 to 46 is disordered; that stretch reads ATSFRREKFVPRGGPDGGDGGKGGSVW. Residues 33-43 are compositionally biased toward gly residues; sequence GPDGGDGGKGG. Residues 160–348 form the OBG-type G domain; the sequence is ADVGLLGMPN…LVHQINQYLT (189 aa). Residues 166–173, 191–195, 213–216, 284–287, and 329–331 each bind GTP; these read GMPNAGKS, FTTLH, DIPG, NKLD, and SAL. Residues serine 173 and threonine 193 each coordinate Mg(2+).

Belongs to the TRAFAC class OBG-HflX-like GTPase superfamily. OBG GTPase family. Monomer. It depends on Mg(2+) as a cofactor.

It localises to the cytoplasm. Functionally, an essential GTPase which binds GTP, GDP and possibly (p)ppGpp with moderate affinity, with high nucleotide exchange rates and a fairly low GTP hydrolysis rate. Plays a role in control of the cell cycle, stress response, ribosome biogenesis and in those bacteria that undergo differentiation, in morphogenesis control. The protein is GTPase Obg of Neisseria meningitidis serogroup B (strain ATCC BAA-335 / MC58).